Consider the following 142-residue polypeptide: 3-hydroxyacyl-[acyl-carrier-protein] dehydratase FabZ (142 aa).

Histidine 47 is a catalytic residue.

The protein belongs to the thioester dehydratase family. FabZ subfamily.

The protein localises to the cytoplasm. It catalyses the reaction a (3R)-hydroxyacyl-[ACP] = a (2E)-enoyl-[ACP] + H2O. Its function is as follows. Involved in unsaturated fatty acids biosynthesis. Catalyzes the dehydration of short chain beta-hydroxyacyl-ACPs and long chain saturated and unsaturated beta-hydroxyacyl-ACPs. The sequence is that of 3-hydroxyacyl-[acyl-carrier-protein] dehydratase FabZ from Thermoanaerobacter pseudethanolicus (strain ATCC 33223 / 39E) (Clostridium thermohydrosulfuricum).